The sequence spans 207 residues: Thymidylate kinase (207 aa).

Residue 7–14 coordinates ATP; the sequence is GPEGAGKS.

The protein belongs to the thymidylate kinase family.

The catalysed reaction is dTMP + ATP = dTDP + ADP. Functionally, phosphorylation of dTMP to form dTDP in both de novo and salvage pathways of dTTP synthesis. The sequence is that of Thymidylate kinase from Pseudomonas putida (strain W619).